Reading from the N-terminus, the 325-residue chain is Sensor histidine kinase YxdK (325 aa).

At 1 to 8 (MKLFLRSH) the chain is on the cytoplasmic side. A helical transmembrane segment spans residues 9–29 (AVLILLFLLQGLFVFFYYWFA). Topologically, residues 30 to 33 (GLHS) are extracellular. Residues 34 to 54 (FSHLFYILGVQLLILAGYLAY) traverse the membrane as a helical segment. At 55–325 (RWYKDRGVYH…SVRFSFLTKM (271 aa)) the chain is on the cytoplasmic side. Residues 118-325 (QWVHQVKTPL…SVRFSFLTKM (208 aa)) form the Histidine kinase domain. H121 carries the phosphohistidine; by autocatalysis modification.

It is found in the cell membrane. The catalysed reaction is ATP + protein L-histidine = ADP + protein N-phospho-L-histidine.. Probable member of the two-component regulatory system YxdK/YxdJ. May activate YxdJ in response to the antibacterial protein LL-37. The protein is Sensor histidine kinase YxdK (yxdK) of Bacillus subtilis (strain 168).